The chain runs to 144 residues: Prefoldin subunit alpha (144 aa).

It belongs to the prefoldin alpha subunit family. Heterohexamer of two alpha and four beta subunits.

It is found in the cytoplasm. Functionally, molecular chaperone capable of stabilizing a range of proteins. Seems to fulfill an ATP-independent, HSP70-like function in archaeal de novo protein folding. This is Prefoldin subunit alpha from Metallosphaera sedula (strain ATCC 51363 / DSM 5348 / JCM 9185 / NBRC 15509 / TH2).